The following is a 105-amino-acid chain: Synaptic plasticity regulator PANTS (105 aa).

This sequence belongs to the UPF0545 family. As to quaternary structure, interacts with RTN4 isoform A/Nogo-A; the interaction results in enhanced RTN4-mediated inhibition of AMPA receptor clustering. Also interacts with NCAM1, RANBP2 and CCT8. Rapidly degraded by proteolysis following neuronal stimulation, resulting in increased AMPA receptor clustering. As to expression, in the postnatal brain, expressed diffusely throughout the hippocampus at a low level at 8 weeks (at protein level). At 16 weeks, strongly expressed in the stratum lucidum of the hippocampus (at protein level). In developing and aging brain, expression is strongest in hippocampus, especially in areas CA3 and CA2, throughout the dorsoventral axis.

It localises to the synapse. It is found in the synaptic cleft. Negatively regulates long-term potentiation and modulates adult synaptic plasticity. Stabilizes the interaction of RTN4 isoform A/Nogo-A with its receptors, inhibiting clustering of postsynaptic AMPA receptors at synaptic sites. Upon neuronal stimulation, degraded at synapses, reducing RTN4 signaling and allowing AMPA receptor clustering at individual synapses. The sequence is that of Synaptic plasticity regulator PANTS from Mus musculus (Mouse).